Consider the following 424-residue polypeptide: Tyrosine--tRNA ligase (424 aa).

Residue Tyr-37 coordinates L-tyrosine. The 'HIGH' region motif lies at 42–51; that stretch reads PTADSLHLGH. Residues Tyr-175 and Gln-179 each coordinate L-tyrosine. A 'KMSKS' region motif is present at residues 235 to 239; that stretch reads KFGKT. Lys-238 contacts ATP. In terms of domain architecture, S4 RNA-binding spans 357-414; sequence AELQKALVSAQLAPSRSQARTLIQSSSISVNGKKQLKPEYIFTSEDRLLDRYTLLRRG.

The protein belongs to the class-I aminoacyl-tRNA synthetase family. TyrS type 1 subfamily. In terms of assembly, homodimer.

It is found in the cytoplasm. It catalyses the reaction tRNA(Tyr) + L-tyrosine + ATP = L-tyrosyl-tRNA(Tyr) + AMP + diphosphate + H(+). Its function is as follows. Catalyzes the attachment of tyrosine to tRNA(Tyr) in a two-step reaction: tyrosine is first activated by ATP to form Tyr-AMP and then transferred to the acceptor end of tRNA(Tyr). The polypeptide is Tyrosine--tRNA ligase (Hamiltonella defensa subsp. Acyrthosiphon pisum (strain 5AT)).